The chain runs to 131 residues: D-ribose pyranase (131 aa).

Histidine 20 (proton donor) is an active-site residue. Residues aspartate 28, histidine 98, and 120 to 122 each bind substrate; that span reads YAN.

This sequence belongs to the RbsD / FucU family. RbsD subfamily. In terms of assembly, homodecamer.

It is found in the cytoplasm. It carries out the reaction beta-D-ribopyranose = beta-D-ribofuranose. The protein operates within carbohydrate metabolism; D-ribose degradation; D-ribose 5-phosphate from beta-D-ribopyranose: step 1/2. In terms of biological role, catalyzes the interconversion of beta-pyran and beta-furan forms of D-ribose. The protein is D-ribose pyranase of Clostridium botulinum (strain Eklund 17B / Type B).